The chain runs to 188 residues: Probable thymidylate kinase (188 aa).

11–18 contributes to the ATP binding site; sequence GIDGSGKT.

This sequence belongs to the thymidylate kinase family.

The enzyme catalyses dTMP + ATP = dTDP + ADP. The polypeptide is Probable thymidylate kinase (tmk) (Methanocaldococcus jannaschii (strain ATCC 43067 / DSM 2661 / JAL-1 / JCM 10045 / NBRC 100440) (Methanococcus jannaschii)).